We begin with the raw amino-acid sequence, 140 residues long: HTH-type transcriptional regulator LysM (140 aa).

One can recognise an HTH asnC-type domain in the interval 4-67 (VDESDLKILE…ELENEIRAIV (64 aa)). Residues 23–42 (YTSIAKELKISEAAVRKRIE) constitute a DNA-binding region (H-T-H motif).

Homotetramer.

The protein resides in the cytoplasm. It functions in the pathway amino-acid biosynthesis; L-lysine biosynthesis via AAA pathway [regulation]. Functionally, in the absence or at low concentrations of lysine, activates the biosynthesis of this amino acid via the alpha-aminoadipate (AAA) pathway. The chain is HTH-type transcriptional regulator LysM (lysM) from Sulfurisphaera tokodaii (strain DSM 16993 / JCM 10545 / NBRC 100140 / 7) (Sulfolobus tokodaii).